Reading from the N-terminus, the 298-residue chain is MNHIQEAFLNTLKVERNFSEHTLKSYQDDLIQFNQFLEQEHLQLKTFEYRDARNYLSYLYSNHLKRTSVSRKISTLRTFYEYWMTLDENIINPFVQLVHPKKEKYLPQFFYEEEMEALFKTVEEDTSKSLRDRVILELLYATGIRVSELVNIKKQDIDFYANGVTVLGKGSKERFVPFGAYCRQSIENYLEHFKPIQSCNHDFLIVNMKGEAITERGVRYVLNDIVKRTAGVSEIHPHKLRHTFATHLLNQGADLRTVQSLLGHVNLSTTGKYTHVSNQQLRKVYLNAHPRAKKENET.

Residues 1–84 (MNHIQEAFLN…TLRTFYEYWM (84 aa)) form the Core-binding (CB) domain. The Tyr recombinase domain occupies 105 to 286 (YLPQFFYEEE…SNQQLRKVYL (182 aa)). Residues Arg145, Lys169, His238, Arg241, and His264 contribute to the active site. The active-site O-(3'-phospho-DNA)-tyrosine intermediate is Tyr273.

It belongs to the 'phage' integrase family. XerC subfamily. As to quaternary structure, forms a cyclic heterotetrameric complex composed of two molecules of XerC and two molecules of XerD.

The protein localises to the cytoplasm. In terms of biological role, site-specific tyrosine recombinase, which acts by catalyzing the cutting and rejoining of the recombining DNA molecules. The XerC-XerD complex is essential to convert dimers of the bacterial chromosome into monomers to permit their segregation at cell division. It also contributes to the segregational stability of plasmids. This is Tyrosine recombinase XerC from Staphylococcus aureus (strain MSSA476).